We begin with the raw amino-acid sequence, 286 residues long: Shikimate dehydrogenase (NADP(+)) (286 aa).

Shikimate-binding positions include 19-21 (SLS) and T66. K70 functions as the Proton acceptor in the catalytic mechanism. The shikimate site is built by N91 and D107. Residues 129–133 (GSGGA) and L229 each bind NADP(+). Y231 is a binding site for shikimate. G252 contributes to the NADP(+) binding site.

It belongs to the shikimate dehydrogenase family. As to quaternary structure, homodimer.

It carries out the reaction shikimate + NADP(+) = 3-dehydroshikimate + NADPH + H(+). It participates in metabolic intermediate biosynthesis; chorismate biosynthesis; chorismate from D-erythrose 4-phosphate and phosphoenolpyruvate: step 4/7. Involved in the biosynthesis of the chorismate, which leads to the biosynthesis of aromatic amino acids. Catalyzes the reversible NADPH linked reduction of 3-dehydroshikimate (DHSA) to yield shikimate (SA). The polypeptide is Shikimate dehydrogenase (NADP(+)) (Prochlorococcus marinus (strain MIT 9215)).